The chain runs to 341 residues: Phosphoribosylformylglycinamidine cyclo-ligase (341 aa).

The protein belongs to the AIR synthase family.

Its subcellular location is the cytoplasm. The enzyme catalyses 2-formamido-N(1)-(5-O-phospho-beta-D-ribosyl)acetamidine + ATP = 5-amino-1-(5-phospho-beta-D-ribosyl)imidazole + ADP + phosphate + H(+). Its pathway is purine metabolism; IMP biosynthesis via de novo pathway; 5-amino-1-(5-phospho-D-ribosyl)imidazole from N(2)-formyl-N(1)-(5-phospho-D-ribosyl)glycinamide: step 2/2. This chain is Phosphoribosylformylglycinamidine cyclo-ligase, found in Agathobacter rectalis (strain ATCC 33656 / DSM 3377 / JCM 17463 / KCTC 5835 / VPI 0990) (Eubacterium rectale).